Reading from the N-terminus, the 211-residue chain is Interleukin-6 (211 aa).

Positions 1-24 are cleaved as a signal peptide; sequence MKFLSARDFQPVAFLGLMLLTATA. Cys-70 and Cys-76 are oxidised to a cystine. Phosphoserine is present on Ser-79. A disulfide bridge connects residues Cys-99 and Cys-109.

The protein belongs to the IL-6 superfamily. Component of a hexamer of two molecules each of IL6, IL6R and IL6ST; first binds to IL6R to associate with the signaling subunit IL6ST. Interacts with IL6R (via the N-terminal ectodomain); this interaction may be affected by IL6R-binding with SORL1, hence decreasing IL6 cis signaling. Interacts with SORL1 (via the N-terminal ectodomain); this interaction leads to IL6 internalization and lysosomal degradation. May form a trimeric complex with the soluble SORL1 ectodomain and soluble IL6R receptor; this interaction might stabilize circulating IL6, hence promoting IL6 trans signaling.

The protein resides in the secreted. Cytokine with a wide variety of biological functions in immunity, tissue regeneration, and metabolism. Binds to IL6R, then the complex associates to the signaling subunit IL6ST/gp130 to trigger the intracellular IL6-signaling pathway. The interaction with the membrane-bound IL6R and IL6ST stimulates 'classic signaling', whereas the binding of IL6 and soluble IL6R to IL6ST stimulates 'trans-signaling'. Alternatively, 'cluster signaling' occurs when membrane-bound IL6:IL6R complexes on transmitter cells activate IL6ST receptors on neighboring receiver cells. Functionally, IL6 is a potent inducer of the acute phase response. Rapid production of IL6 contributes to host defense during infection and tissue injury, but excessive IL6 synthesis is involved in disease pathology. In the innate immune response, is synthesized by myeloid cells, such as macrophages and dendritic cells, upon recognition of pathogens through toll-like receptors (TLRs) at the site of infection or tissue injury. In the adaptive immune response, is required for the differentiation of B-cells into immunoglolin-secreting cells. Plays a major role in the differentiation of CD4(+) T cell subsets. Essential factor for the development of T follicular helper (Tfh) cells that are required for the induction of germinal-center formation. Together with IL21, controls the early generation of Tfh cells and are critical for an effective antibody response to acute viral infection. Required to drive naive CD4(+) T cells to the Th17 lineage, through 'cluster signaling' by dendritic cells. Also required for proliferation of myeloma cells and the survival of plasmablast cells. In terms of biological role, acts as an essential factor in bone homeostasis and on vessels directly or indirectly by induction of VEGF, resulting in increased angiogenesis activity and vascular permeability. Induces, through 'trans-signaling' and synergistically with IL1B and TNF, the production of VEGF. Involved in metabolic controls, is discharged into the bloodstream after muscle contraction increasing lipolysis and improving insulin resistance. 'Trans-signaling' in central nervous system regulates energy and glucose homeostasis. Mediates, through GLP-1, crosstalk between insulin-sensitive tissues, intestinal L cells and pancreatic islets to adapt to changes in insulin demand. Also acts as a myokine. Plays a protective role during liver injury, being required for maintenance of tissue regeneration. Also has a pivotal role in iron metabolism by regulating HAMP/hepcidin expression upon inflammation or bacterial infection. Through activation of IL6ST-YAP-NOTCH pathway, induces inflammation-induced epithelial regeneration. The sequence is that of Interleukin-6 from Rattus norvegicus (Rat).